Consider the following 100-residue polypeptide: uncharacterized protein (100 aa).

This sequence belongs to the csb family.

This is an uncharacterized protein from Dictyostelium discoideum (Social amoeba).